Consider the following 209-residue polypeptide: Uracil phosphoribosyltransferase (209 aa).

5-phospho-alpha-D-ribose 1-diphosphate-binding positions include R79, R104, and 131 to 139 (DPMLATGGS). Uracil-binding positions include I194 and 199–201 (GDA). 5-phospho-alpha-D-ribose 1-diphosphate is bound at residue D200.

It belongs to the UPRTase family. The cofactor is Mg(2+).

It catalyses the reaction UMP + diphosphate = 5-phospho-alpha-D-ribose 1-diphosphate + uracil. Its pathway is pyrimidine metabolism; UMP biosynthesis via salvage pathway; UMP from uracil: step 1/1. Its activity is regulated as follows. Allosterically activated by GTP. Catalyzes the conversion of uracil and 5-phospho-alpha-D-ribose 1-diphosphate (PRPP) to UMP and diphosphate. The protein is Uracil phosphoribosyltransferase of Geobacter sp. (strain M21).